Consider the following 206-residue polypeptide: Protein Nef (206 aa).

The N-myristoyl glycine; by host moiety is linked to residue Gly2. Ser6 bears the Phosphoserine; by host mark. The tract at residues 62–65 (EDED) is acidic; interacts with host PACS1 and PACS2; stabilizes the interaction of NEF/MHC-I with host AP1M1; necessary for MHC-I internalization. Residues 69–78 (PVRPQVPLRP) are SH3-binding; interaction with Src family tyrosine kinases. Residues 72–75 (PQVP) carry the PxxP; stabilizes the interaction of NEF/MHC-I with host AP1M1; necessary for MHC-I internalization motif. The mediates dimerization, Nef-PTE1 interaction stretch occupies residues 108–124 (EILDLWVYHTQGFFPDW). The segment at 148 to 180 (VDPREVEEATEGENNCLLHPVNQHGMEDEHREV) is binding to ATP6V1H. The short motif at 164-165 (LL) is the Dileucine internalization motif; necessary for CD4 internalization element. A Diacidic; necessary for CD4 internalization motif is present at residues 174–175 (ED).

Belongs to the lentivirus primate group Nef protein family. Monomer; cytosolic form. Homodimer; membrane bound form. Interacts with Nef associated p21-activated kinase (PAK2); this interaction activates PAK2. Associates with the Nef-MHC-I-AP1 complex; this complex is required for MHC-I internalization. Interacts (via C-terminus) with host PI3-kinase. Interacts with host PACS1; this interaction seems to be weak. Interacts with host PACS2. Interacts with host LCK and MAPK3; these interactions inhibit the kinase activity of the latter. Interacts with host ATP6V1H; this interaction may play a role in CD4 endocytosis. Associates with the CD4-Nef-AP2 complex; this complex is required for CD4 internalization. Interacts with host AP2 subunit alpha and AP2 subunit sigma2. Interacts with TCR-zeta chain; this interaction up-regulates the Fas ligand (FasL) surface expression. Interacts with host HCK, LYN, and SRC; these interactions activate the Src family kinases. Interacts with MAP3K5; this interaction inhibits the Fas and TNFR-mediated death signals. Interacts with beta-COP and PTE1. Interacts with human RACK1; this increases Nef phosphorylation by PKC. Interacts with TP53; this interaction decreases the half-life of TP53, protecting the infected cell against p53-mediated apoptosis. The virion-associated Nef proteins are cleaved by the viral protease to release the soluble C-terminal core protein. Nef is probably cleaved concomitantly with viral structural proteins on maturation of virus particles. In terms of processing, myristoylated. Post-translationally, phosphorylated on serine residues, probably by host PKCdelta and theta.

Its subcellular location is the host cell membrane. It localises to the virion. The protein localises to the secreted. It is found in the host Golgi apparatus membrane. Factor of infectivity and pathogenicity, required for optimal virus replication. Alters numerous pathways of T-lymphocyte function and down-regulates immunity surface molecules in order to evade host defense and increase viral infectivity. Alters the functionality of other immunity cells, like dendritic cells, monocytes/macrophages and NK cells. Its function is as follows. In infected CD4(+) T-lymphocytes, down-regulates the surface MHC-I, mature MHC-II, CD4, CD28, CCR5 and CXCR4 molecules. Mediates internalization and degradation of host CD4 through the interaction of with the cytoplasmic tail of CD4, the recruitment of AP-2 (clathrin adapter protein complex 2), internalization through clathrin coated pits, and subsequent transport to endosomes and lysosomes for degradation. Diverts host MHC-I molecules to the trans-Golgi network-associated endosomal compartments by an endocytic pathway to finally target them for degradation. MHC-I down-regulation may involve AP-1 (clathrin adapter protein complex 1) or possibly Src family kinase-ZAP70/Syk-PI3K cascade recruited by PACS2. In consequence infected cells are masked for immune recognition by cytotoxic T-lymphocytes. Decreasing the number of immune receptors also prevents reinfection by more HIV particles (superinfection). Down-regulates host SERINC3 and SERINC5 thereby excluding these proteins from the viral particles. Virion infectivity is drastically higher when SERINC3 or SERINC5 are excluded from the viral envelope, because these host antiviral proteins impair the membrane fusion event necessary for subsequent virion penetration. Functionally, bypasses host T-cell signaling by inducing a transcriptional program nearly identical to that of anti-CD3 cell activation. Interaction with TCR-zeta chain up-regulates the Fas ligand (FasL). Increasing surface FasL molecules and decreasing surface MHC-I molecules on infected CD4(+) cells send attacking cytotoxic CD8+ T-lymphocytes into apoptosis. In terms of biological role, plays a role in optimizing the host cell environment for viral replication without causing cell death by apoptosis. Protects the infected cells from apoptosis in order to keep them alive until the next virus generation is ready to strike. Inhibits the Fas and TNFR-mediated death signals by blocking MAP3K5/ASK1. Decreases the half-life of TP53, protecting the infected cell against p53-mediated apoptosis. Inhibits the apoptotic signals regulated by the Bcl-2 family proteins through the formation of a Nef/PI3-kinase/PAK2 complex that leads to activation of PAK2 and induces phosphorylation of host BAD. Extracellular Nef protein targets CD4(+) T-lymphocytes for apoptosis by interacting with CXCR4 surface receptors. This is Protein Nef from Homo sapiens (Human).